Reading from the N-terminus, the 729-residue chain is Polyribonucleotide nucleotidyltransferase (729 aa).

2 residues coordinate Mg(2+): D516 and D522. Positions 581 to 641 (PSTEHFSINP…EKVAAAKEHI (61 aa)) constitute a KH domain. The 68-residue stretch at 658–725 (GKTYVGKVKK…KGKKVELATP (68 aa)) folds into the S1 motif domain.

The protein belongs to the polyribonucleotide nucleotidyltransferase family. The cofactor is Mg(2+).

Its subcellular location is the cytoplasm. The catalysed reaction is RNA(n+1) + phosphate = RNA(n) + a ribonucleoside 5'-diphosphate. Its function is as follows. Involved in mRNA degradation. Catalyzes the phosphorolysis of single-stranded polyribonucleotides processively in the 3'- to 5'-direction. The chain is Polyribonucleotide nucleotidyltransferase from Sulfurovum sp. (strain NBC37-1).